Reading from the N-terminus, the 252-residue chain is 2-succinyl-6-hydroxy-2,4-cyclohexadiene-1-carboxylate synthase (252 aa).

The protein belongs to the AB hydrolase superfamily. MenH family. In terms of assembly, monomer.

It carries out the reaction 5-enolpyruvoyl-6-hydroxy-2-succinyl-cyclohex-3-ene-1-carboxylate = (1R,6R)-6-hydroxy-2-succinyl-cyclohexa-2,4-diene-1-carboxylate + pyruvate. It participates in quinol/quinone metabolism; 1,4-dihydroxy-2-naphthoate biosynthesis; 1,4-dihydroxy-2-naphthoate from chorismate: step 3/7. The protein operates within quinol/quinone metabolism; menaquinone biosynthesis. Its function is as follows. Catalyzes a proton abstraction reaction that results in 2,5-elimination of pyruvate from 2-succinyl-5-enolpyruvyl-6-hydroxy-3-cyclohexene-1-carboxylate (SEPHCHC) and the formation of 2-succinyl-6-hydroxy-2,4-cyclohexadiene-1-carboxylate (SHCHC). The chain is 2-succinyl-6-hydroxy-2,4-cyclohexadiene-1-carboxylate synthase from Salmonella arizonae (strain ATCC BAA-731 / CDC346-86 / RSK2980).